The following is a 502-amino-acid chain: Cobyric acid synthase (502 aa).

Residues 260 to 433 form the GATase cobBQ-type domain; it reads ILRVAVCAIP…WHGSLESDGF (174 aa). Catalysis depends on C341, which acts as the Nucleophile. Residue H425 is part of the active site.

It belongs to the CobB/CobQ family. CobQ subfamily.

It functions in the pathway cofactor biosynthesis; adenosylcobalamin biosynthesis. In terms of biological role, catalyzes amidations at positions B, D, E, and G on adenosylcobyrinic A,C-diamide. NH(2) groups are provided by glutamine, and one molecule of ATP is hydrogenolyzed for each amidation. The sequence is that of Cobyric acid synthase from Streptomyces avermitilis (strain ATCC 31267 / DSM 46492 / JCM 5070 / NBRC 14893 / NCIMB 12804 / NRRL 8165 / MA-4680).